The following is a 91-amino-acid chain: uncharacterized protein (91 aa).

This is an uncharacterized protein from Homo sapiens (Human).